Reading from the N-terminus, the 375-residue chain is Alpha-2,8-sialyltransferase 8B (375 aa).

The Cytoplasmic portion of the chain corresponds to Met-1 to Arg-6. The chain crosses the membrane as a helical; Signal-anchor for type II membrane protein span at residues Ser-7–Ala-23. Topologically, residues Asp-24 to Thr-375 are lumenal. N-linked (GlcNAc...) asparagine glycans are attached at residues Asn-60, Asn-72, Asn-89, and Asn-134. Disulfide bonds link Cys-157-Cys-307 and Cys-171-Cys-371. CMP-N-acetyl-beta-neuraminate is bound by residues Asn-162 and Asn-185. Asn-219 and Asn-234 each carry an N-linked (GlcNAc...) asparagine glycan. Residues Thr-294, Thr-295, Gly-296, Trp-316, Tyr-329, and His-330 each coordinate CMP-N-acetyl-beta-neuraminate. The active-site Proton donor/acceptor is the His-346.

This sequence belongs to the glycosyltransferase 29 family. Autopolysialylated. Autopolysialylation is not a prerequisite for the polysialylation acitity, but enhances the polysialylation acitity. In terms of tissue distribution, expressed only in newborn brain.

It localises to the golgi apparatus membrane. The protein localises to the secreted. The protein resides in the cell membrane. The enzyme catalyses [N-acetyl-alpha-D-neuraminosyl-(2-&gt;8)](n) + CMP-N-acetyl-beta-neuraminate = [N-acetyl-alpha-D-neuraminosyl-(2-&gt;8)](n+1) + CMP + H(+). The protein operates within protein modification; protein glycosylation. Its function is as follows. Catalyzes the transfer of a sialic acid from a CMP-linked sialic acid donor onto a terminal alpha-2,3-, alpha-2,6-, or alpha-2,8-linked sialic acid of an N-linked glycan acceptor through alpha-2,8-linkages. Therefore, participates in polysialic acid synthesis on various sialylated N-acetyllactosaminyl oligosaccharides (alpha-2,3-, alpha-2,6-, or alpha-2,8-linked sialic acid), including NCAM1, NCAM1 N-glycans, FETUB N-glycans, and to a lesser extent sialylparagloboside (SPG) and AHSG, which does not require the initial addition of an alpha 2,8-sialic acid. However, does not exhibit sialic acid-polymerase activity. Catalyzes polysialic acid synthesis in the hippocampal on NCAM1 and supports neurite outgrowth. ST8SIA2-mediated polysialylation influences on oligodendrocyte differentiation and may promote the integrity of myelin and axons. The chain is Alpha-2,8-sialyltransferase 8B from Rattus norvegicus (Rat).